The following is a 197-amino-acid chain: Dephospho-CoA kinase (197 aa).

Residues 2–197 (IIGITGGIAS…SALLSLANPR (196 aa)) enclose the DPCK domain. 10–15 (ASGKST) contributes to the ATP binding site.

This sequence belongs to the CoaE family.

Its subcellular location is the cytoplasm. The catalysed reaction is 3'-dephospho-CoA + ATP = ADP + CoA + H(+). Its pathway is cofactor biosynthesis; coenzyme A biosynthesis; CoA from (R)-pantothenate: step 5/5. Functionally, catalyzes the phosphorylation of the 3'-hydroxyl group of dephosphocoenzyme A to form coenzyme A. The chain is Dephospho-CoA kinase from Streptococcus pyogenes serotype M3 (strain ATCC BAA-595 / MGAS315).